Here is a 966-residue protein sequence, read N- to C-terminus: Envelope glycoprotein (966 aa).

The signal sequence occupies residues M1–A83. Residues E84–G801 lie on the Extracellular side of the membrane. Residues N101, N134, N179, N220, N231, N334, N351, N357, N382, N403, N407, N438, N443, N449, N459, N469, N483, N495, N505, N511, N529, and N536 are each glycosylated (N-linked (GlcNAc...) asparagine; by host). Residues G633–L653 form a fusion peptide region. Coiled coils occupy residues K665 to L715 and R756 to E791. Positions L699–L715 are immunosuppression. Residues W802 to I822 form a helical membrane-spanning segment. The Cytoplasmic segment spans residues R823–L966.

The mature envelope protein (Env) consists of a trimer of SU-TM heterodimers attached by noncovalent interactions or by a labile interchain disulfide bond. Post-translationally, specific enzymatic cleavages in vivo yield mature proteins. Envelope glycoproteins are synthesized as an inactive precursor that is N-glycosylated and processed likely by host cell furin or by a furin-like protease in the Golgi to yield the mature SU and TM proteins. The cleavage site between SU and TM requires the minimal sequence [KR]-X-[KR]-R.

It localises to the virion membrane. Its subcellular location is the host cell membrane. The surface protein (SU) attaches the virus to the host cell by binding to its receptor. This interaction triggers the refolding of the transmembrane protein (TM) and is thought to activate its fusogenic potential by unmasking its fusion peptide. Fusion occurs at the host cell plasma membrane. In terms of biological role, the transmembrane protein (TM) acts as a class I viral fusion protein. Under the current model, the protein has at least 3 conformational states: pre-fusion native state, pre-hairpin intermediate state, and post-fusion hairpin state. During viral and target cell membrane fusion, the coiled coil regions (heptad repeats) assume a trimer-of-hairpins structure, positioning the fusion peptide in close proximity to the C-terminal region of the ectodomain. The formation of this structure appears to drive apposition and subsequent fusion of viral and target cell membranes. Membranes fusion leads to delivery of the nucleocapsid into the cytoplasm. The polypeptide is Envelope glycoprotein (env) (Caprine arthritis encephalitis virus (strain Cork) (CAEV-Co)).